We begin with the raw amino-acid sequence, 357 residues long: 3-isopropylmalate dehydrogenase (357 aa).

Residue 76–89 coordinates NAD(+); that stretch reads GPKWDDLPSEKRPE. Substrate-binding residues include Arg96, Arg106, Arg135, and Asp224. 3 residues coordinate Mg(2+): Asp224, Asp248, and Asp252. 282 to 294 is an NAD(+) binding site; it reads GSAPDIAGQDKAN.

It belongs to the isocitrate and isopropylmalate dehydrogenases family. LeuB type 1 subfamily. As to quaternary structure, homodimer. It depends on Mg(2+) as a cofactor. Requires Mn(2+) as cofactor.

Its subcellular location is the cytoplasm. It carries out the reaction (2R,3S)-3-isopropylmalate + NAD(+) = 4-methyl-2-oxopentanoate + CO2 + NADH. The protein operates within amino-acid biosynthesis; L-leucine biosynthesis; L-leucine from 3-methyl-2-oxobutanoate: step 3/4. Its function is as follows. Catalyzes the oxidation of 3-carboxy-2-hydroxy-4-methylpentanoate (3-isopropylmalate) to 3-carboxy-4-methyl-2-oxopentanoate. The product decarboxylates to 4-methyl-2 oxopentanoate. In Nitratidesulfovibrio vulgaris (strain ATCC 29579 / DSM 644 / CCUG 34227 / NCIMB 8303 / VKM B-1760 / Hildenborough) (Desulfovibrio vulgaris), this protein is 3-isopropylmalate dehydrogenase.